The primary structure comprises 316 residues: HPr kinase/phosphorylase (316 aa).

Active-site residues include His-141 and Lys-162. Residue 156–163 participates in ATP binding; the sequence is GESGVGKS. Residue Ser-163 participates in Mg(2+) binding. Residue Asp-180 is the Proton acceptor; for phosphorylation activity. Proton donor; for dephosphorylation activity of the active site. Positions 204–213 are important for the catalytic mechanism of both phosphorylation and dephosphorylation; the sequence is MEIRGIGIID. Residue Glu-205 coordinates Mg(2+). The active site involves Arg-246. The interval 267–272 is important for the catalytic mechanism of dephosphorylation; that stretch reads PVKVGR.

This sequence belongs to the HPrK/P family. In terms of assembly, homohexamer. The cofactor is Mg(2+).

The catalysed reaction is [HPr protein]-L-serine + ATP = [HPr protein]-O-phospho-L-serine + ADP + H(+). It carries out the reaction [HPr protein]-O-phospho-L-serine + phosphate + H(+) = [HPr protein]-L-serine + diphosphate. Its function is as follows. Catalyzes the ATP- as well as the pyrophosphate-dependent phosphorylation of a specific serine residue in HPr, a phosphocarrier protein of the phosphoenolpyruvate-dependent sugar phosphotransferase system (PTS). HprK/P also catalyzes the pyrophosphate-producing, inorganic phosphate-dependent dephosphorylation (phosphorolysis) of seryl-phosphorylated HPr (P-Ser-HPr). The two antagonistic activities of HprK/P are regulated by several intracellular metabolites, which change their concentration in response to the absence or presence of rapidly metabolisable carbon sources (glucose, fructose, etc.) in the growth medium. Therefore, by controlling the phosphorylation state of HPr, HPrK/P is a sensor enzyme that plays a major role in the regulation of carbon metabolism and sugar transport: it mediates carbon catabolite repression (CCR), and regulates PTS-catalyzed carbohydrate uptake and inducer exclusion. This Lactobacillus delbrueckii subsp. bulgaricus (strain ATCC 11842 / DSM 20081 / BCRC 10696 / JCM 1002 / NBRC 13953 / NCIMB 11778 / NCTC 12712 / WDCM 00102 / Lb 14) protein is HPr kinase/phosphorylase.